Consider the following 219-residue polypeptide: Cytidylate kinase (219 aa).

Residue 15–23 (GPAASGKGT) participates in ATP binding.

Belongs to the cytidylate kinase family. Type 1 subfamily.

Its subcellular location is the cytoplasm. The enzyme catalyses CMP + ATP = CDP + ADP. It catalyses the reaction dCMP + ATP = dCDP + ADP. The sequence is that of Cytidylate kinase from Brucella suis biovar 1 (strain 1330).